The primary structure comprises 768 residues: Solabiose phosphorylase (768 aa).

The active-site Proton donor is the Asp456.

This sequence belongs to the glycosyl hydrolase 94 family.

It catalyses the reaction solabiose + phosphate = D-galactose + alpha-D-glucose 1-phosphate. In terms of biological role, catalyzes the reversible phosphorolysis of solabiose. Catalyzes the phosphorolysis and synthesis of solabiose through a sequential bi-bi mechanism involving the formation of a ternary complex. Is probably involved in the metabolism of solabiose released from solabiose-containing compounds. The chain is Solabiose phosphorylase from Paenibacillus borealis.